The chain runs to 720 residues: Polyribonucleotide nucleotidyltransferase (720 aa).

Residues aspartate 484 and aspartate 490 each contribute to the Mg(2+) site. One can recognise a KH domain in the interval 551 to 610; the sequence is PRMYKISIDPSKIGSVIGSGGKTIRSIIEQTNTTVDIENDGTVVIGATDEASAQKAIKII. An S1 motif domain is found at 620-688; the sequence is GSVYTGKVTR…SQGRINLSRR (69 aa). The interval 697 to 720 is disordered; sequence PISRNRDSQPRRSGPFRPQDRSNS.

Belongs to the polyribonucleotide nucleotidyltransferase family. Mg(2+) serves as cofactor.

The protein localises to the cytoplasm. It catalyses the reaction RNA(n+1) + phosphate = RNA(n) + a ribonucleoside 5'-diphosphate. Its function is as follows. Involved in mRNA degradation. Catalyzes the phosphorolysis of single-stranded polyribonucleotides processively in the 3'- to 5'-direction. The chain is Polyribonucleotide nucleotidyltransferase from Dehalococcoides mccartyi (strain ATCC BAA-2266 / KCTC 15142 / 195) (Dehalococcoides ethenogenes (strain 195)).